The primary structure comprises 570 residues: Proline--tRNA ligase (570 aa).

The protein belongs to the class-II aminoacyl-tRNA synthetase family. ProS type 1 subfamily. As to quaternary structure, homodimer.

The protein resides in the cytoplasm. The catalysed reaction is tRNA(Pro) + L-proline + ATP = L-prolyl-tRNA(Pro) + AMP + diphosphate. Its function is as follows. Catalyzes the attachment of proline to tRNA(Pro) in a two-step reaction: proline is first activated by ATP to form Pro-AMP and then transferred to the acceptor end of tRNA(Pro). As ProRS can inadvertently accommodate and process non-cognate amino acids such as alanine and cysteine, to avoid such errors it has two additional distinct editing activities against alanine. One activity is designated as 'pretransfer' editing and involves the tRNA(Pro)-independent hydrolysis of activated Ala-AMP. The other activity is designated 'posttransfer' editing and involves deacylation of mischarged Ala-tRNA(Pro). The misacylated Cys-tRNA(Pro) is not edited by ProRS. This is Proline--tRNA ligase from Desulfotalea psychrophila (strain LSv54 / DSM 12343).